A 539-amino-acid chain; its full sequence is Phosphoenolpyruvate carboxykinase (ATP) (539 aa).

Substrate-binding residues include Arg-64, Tyr-206, and Lys-212. ATP is bound by residues Lys-212, His-231, and 247–255 (GLSGTGKTT). Lys-212 and His-231 together coordinate Mn(2+). Residue Asp-268 coordinates Mn(2+). ATP contacts are provided by residues Glu-296, Arg-332, 448 to 449 (RI), and Thr-454. Arg-332 serves as a coordination point for substrate.

The protein belongs to the phosphoenolpyruvate carboxykinase (ATP) family. Monomer. Requires Mn(2+) as cofactor.

The protein resides in the cytoplasm. It carries out the reaction oxaloacetate + ATP = phosphoenolpyruvate + ADP + CO2. The protein operates within carbohydrate biosynthesis; gluconeogenesis. Its function is as follows. Involved in the gluconeogenesis. Catalyzes the conversion of oxaloacetate (OAA) to phosphoenolpyruvate (PEP) through direct phosphoryl transfer between the nucleoside triphosphate and OAA. This is Phosphoenolpyruvate carboxykinase (ATP) from Salmonella gallinarum (strain 287/91 / NCTC 13346).